The sequence spans 440 residues: Chaperone SurA (440 aa).

A signal peptide spans 1–25; the sequence is MGTKLSSRSPFSLPFLTLLAGMAIA. PpiC domains are found at residues 182 to 283 and 294 to 392; these read SDEY…KLVE and IDQT…QVIE.

It is found in the periplasm. The catalysed reaction is [protein]-peptidylproline (omega=180) = [protein]-peptidylproline (omega=0). Chaperone involved in the correct folding and assembly of outer membrane proteins. Recognizes specific patterns of aromatic residues and the orientation of their side chains, which are found more frequently in integral outer membrane proteins. May act in both early periplasmic and late outer membrane-associated steps of protein maturation. This chain is Chaperone SurA, found in Nitrosospira multiformis (strain ATCC 25196 / NCIMB 11849 / C 71).